Consider the following 254-residue polypeptide: Imidazole glycerol phosphate synthase subunit HisF (254 aa).

Residues aspartate 11 and aspartate 130 contribute to the active site.

Belongs to the HisA/HisF family. In terms of assembly, heterodimer of HisH and HisF.

The protein localises to the cytoplasm. It catalyses the reaction 5-[(5-phospho-1-deoxy-D-ribulos-1-ylimino)methylamino]-1-(5-phospho-beta-D-ribosyl)imidazole-4-carboxamide + L-glutamine = D-erythro-1-(imidazol-4-yl)glycerol 3-phosphate + 5-amino-1-(5-phospho-beta-D-ribosyl)imidazole-4-carboxamide + L-glutamate + H(+). Its pathway is amino-acid biosynthesis; L-histidine biosynthesis; L-histidine from 5-phospho-alpha-D-ribose 1-diphosphate: step 5/9. IGPS catalyzes the conversion of PRFAR and glutamine to IGP, AICAR and glutamate. The HisF subunit catalyzes the cyclization activity that produces IGP and AICAR from PRFAR using the ammonia provided by the HisH subunit. In Solibacter usitatus (strain Ellin6076), this protein is Imidazole glycerol phosphate synthase subunit HisF.